The following is a 118-amino-acid chain: Putative ankyrin repeat protein R747 (118 aa).

Residues N70–R99 form an ANK repeat.

The polypeptide is Putative ankyrin repeat protein R747 (Acanthamoeba polyphaga (Amoeba)).